Reading from the N-terminus, the 275-residue chain is Light-independent protochlorophyllide reductase iron-sulfur ATP-binding protein (275 aa).

ATP contacts are provided by residues glycine 12–threonine 17 and lysine 41. Residue serine 16 coordinates Mg(2+). [4Fe-4S] cluster-binding residues include cysteine 97 and cysteine 131. ATP is bound at residue asparagine 182–arginine 183.

It belongs to the NifH/BchL/ChlL family. In terms of assembly, homodimer. Protochlorophyllide reductase is composed of three subunits; BchL, BchN and BchB. [4Fe-4S] cluster is required as a cofactor.

It carries out the reaction chlorophyllide a + oxidized 2[4Fe-4S]-[ferredoxin] + 2 ADP + 2 phosphate = protochlorophyllide a + reduced 2[4Fe-4S]-[ferredoxin] + 2 ATP + 2 H2O. Its pathway is porphyrin-containing compound metabolism; bacteriochlorophyll biosynthesis (light-independent). Functionally, component of the dark-operative protochlorophyllide reductase (DPOR) that uses Mg-ATP and reduced ferredoxin to reduce ring D of protochlorophyllide (Pchlide) to form chlorophyllide a (Chlide). This reaction is light-independent. The L component serves as a unique electron donor to the NB-component of the complex, and binds Mg-ATP. In Prosthecochloris aestuarii (strain DSM 271 / SK 413), this protein is Light-independent protochlorophyllide reductase iron-sulfur ATP-binding protein.